A 200-amino-acid chain; its full sequence is 3-isopropylmalate dehydratase small subunit (200 aa).

This sequence belongs to the LeuD family. LeuD type 1 subfamily. As to quaternary structure, heterodimer of LeuC and LeuD.

It catalyses the reaction (2R,3S)-3-isopropylmalate = (2S)-2-isopropylmalate. It functions in the pathway amino-acid biosynthesis; L-leucine biosynthesis; L-leucine from 3-methyl-2-oxobutanoate: step 2/4. In terms of biological role, catalyzes the isomerization between 2-isopropylmalate and 3-isopropylmalate, via the formation of 2-isopropylmaleate. This Yersinia pestis bv. Antiqua (strain Antiqua) protein is 3-isopropylmalate dehydratase small subunit.